Here is an 876-residue protein sequence, read N- to C-terminus: Alanine--tRNA ligase (876 aa).

N6-acetyllysine is present on K74. 4 residues coordinate Zn(2+): H564, H568, C666, and H670.

This sequence belongs to the class-II aminoacyl-tRNA synthetase family. As to quaternary structure, homotetramer. Zn(2+) serves as cofactor.

It is found in the cytoplasm. The catalysed reaction is tRNA(Ala) + L-alanine + ATP = L-alanyl-tRNA(Ala) + AMP + diphosphate. Catalyzes the attachment of alanine to tRNA(Ala) in a two-step reaction: alanine is first activated by ATP to form Ala-AMP and then transferred to the acceptor end of tRNA(Ala). Also edits incorrectly charged Ser-tRNA(Ala) and Gly-tRNA(Ala) via its editing domain. This is Alanine--tRNA ligase from Escherichia coli O1:K1 / APEC.